We begin with the raw amino-acid sequence, 370 residues long: Histidinol-phosphate aminotransferase (370 aa).

Lysine 220 carries the N6-(pyridoxal phosphate)lysine modification.

Belongs to the class-II pyridoxal-phosphate-dependent aminotransferase family. Histidinol-phosphate aminotransferase subfamily. In terms of assembly, homodimer. Pyridoxal 5'-phosphate is required as a cofactor.

The enzyme catalyses L-histidinol phosphate + 2-oxoglutarate = 3-(imidazol-4-yl)-2-oxopropyl phosphate + L-glutamate. It participates in amino-acid biosynthesis; L-histidine biosynthesis; L-histidine from 5-phospho-alpha-D-ribose 1-diphosphate: step 7/9. This chain is Histidinol-phosphate aminotransferase, found in Granulibacter bethesdensis (strain ATCC BAA-1260 / CGDNIH1).